A 244-amino-acid polypeptide reads, in one-letter code: U11/U12 small nuclear ribonucleoprotein 35 kDa protein (244 aa).

One can recognise an RRM domain in the interval 51-129 (LTLFVARLNL…HEIFVDYELE (79 aa)). Positions 146–162 (GKKESGQLRFGGRDRPF) are enriched in basic and acidic residues. Residues 146-244 (GKKESGQLRF…KSRDKRDRSK (99 aa)) are disordered. A Glycyl lysine isopeptide (Lys-Gly) (interchain with G-Cter in SUMO2) cross-link involves residue lysine 172. Composition is skewed to basic and acidic residues over residues 173–185 (NEPH…ERRE) and 192–244 (RHWD…DRSK).

As to quaternary structure, component of the U11/U12 snRNPs that are part of the U12-type spliceosome.

It is found in the nucleus. This is U11/U12 small nuclear ribonucleoprotein 35 kDa protein (Snrnp35) from Mus musculus (Mouse).